Consider the following 402-residue polypeptide: CCA-adding enzyme (402 aa).

2 residues coordinate ATP: Gly-32 and Arg-35. The CTP site is built by Gly-32 and Arg-35. 2 residues coordinate Mg(2+): Asp-45 and Asp-47. The ATP site is built by Arg-116, Asp-159, Arg-162, Arg-165, and Arg-168. The CTP site is built by Arg-116, Asp-159, Arg-162, Arg-165, and Arg-168.

This sequence belongs to the tRNA nucleotidyltransferase/poly(A) polymerase family. Bacterial CCA-adding enzyme type 3 subfamily. In terms of assembly, homodimer. Requires Mg(2+) as cofactor.

The enzyme catalyses a tRNA precursor + 2 CTP + ATP = a tRNA with a 3' CCA end + 3 diphosphate. It catalyses the reaction a tRNA with a 3' CCA end + 2 CTP + ATP = a tRNA with a 3' CCACCA end + 3 diphosphate. Functionally, catalyzes the addition and repair of the essential 3'-terminal CCA sequence in tRNAs without using a nucleic acid template. Adds these three nucleotides in the order of C, C, and A to the tRNA nucleotide-73, using CTP and ATP as substrates and producing inorganic pyrophosphate. tRNA 3'-terminal CCA addition is required both for tRNA processing and repair. Also involved in tRNA surveillance by mediating tandem CCA addition to generate a CCACCA at the 3' terminus of unstable tRNAs. While stable tRNAs receive only 3'-terminal CCA, unstable tRNAs are marked with CCACCA and rapidly degraded. The protein is CCA-adding enzyme of Streptococcus pyogenes serotype M3 (strain ATCC BAA-595 / MGAS315).